A 141-amino-acid chain; its full sequence is MENKDIRKILPHRYPFLLVDRIIELEEGKRAVGIKNVTSNEPFFQGHFPDNPIMPGVLIVEALAQVAGIAVMNVEEFKGKLGLFAGIDKCRFKKVVRPGDQLILEVSIDSIRMGLVKAKGVAKVGEEIAATAELMFVMAEE.

H47 is a catalytic residue.

It belongs to the thioester dehydratase family. FabZ subfamily.

Its subcellular location is the cytoplasm. The enzyme catalyses a (3R)-hydroxyacyl-[ACP] = a (2E)-enoyl-[ACP] + H2O. Its function is as follows. Involved in unsaturated fatty acids biosynthesis. Catalyzes the dehydration of short chain beta-hydroxyacyl-ACPs and long chain saturated and unsaturated beta-hydroxyacyl-ACPs. The sequence is that of 3-hydroxyacyl-[acyl-carrier-protein] dehydratase FabZ from Caldanaerobacter subterraneus subsp. tengcongensis (strain DSM 15242 / JCM 11007 / NBRC 100824 / MB4) (Thermoanaerobacter tengcongensis).